The chain runs to 284 residues: Orotidine 5'-phosphate decarboxylase (284 aa).

Residues aspartate 42, 64-66, 96-105, tyrosine 237, and arginine 255 contribute to the substrate site; these read KTH and DRKFADIGNT. Lysine 98 serves as the catalytic Proton donor.

It belongs to the OMP decarboxylase family.

The catalysed reaction is orotidine 5'-phosphate + H(+) = UMP + CO2. It participates in pyrimidine metabolism; UMP biosynthesis via de novo pathway; UMP from orotate: step 2/2. In Magnusiomyces magnusii (Yeast), this protein is Orotidine 5'-phosphate decarboxylase (URA3).